The primary structure comprises 80 residues: ATP synthase F(1) complex subunit delta, mitochondrial (80 aa).

The transit peptide at 1–22 (MLPATLLRXSGLGRVVRQARAY) directs the protein to the mitochondrion.

This sequence belongs to the ATPase epsilon chain family. In terms of assembly, component of the ATP synthase complex composed at least of ATP5F1A/subunit alpha, ATP5F1B/subunit beta, ATP5MC1/subunit c (homooctomer), MT-ATP6/subunit a, MT-ATP8/subunit 8, ATP5ME/subunit e, ATP5MF/subunit f, ATP5MG/subunit g, ATP5MK/subunit k, ATP5MJ/subunit j, ATP5F1C/subunit gamma, ATP5F1D/subunit delta, ATP5F1E/subunit epsilon, ATP5PF/subunit F6, ATP5PB/subunit b, ATP5PD/subunit d, ATP5PO/subunit OSCP. ATP synthase complex consists of a soluble F(1) head domain (subunits alpha(3) and beta(3)) - the catalytic core - and a membrane F(0) domain - the membrane proton channel (subunits c, a, 8, e, f, g, k and j). These two domains are linked by a central stalk (subunits gamma, delta, and epsilon) rotating inside the F1 region and a stationary peripheral stalk (subunits F6, b, d, and OSCP). Component of a complex composed at least by ATPIF1, ATP5F1A, ATP5F1B, ATP5F1C AND ATP5F1E.

It localises to the mitochondrion. The protein localises to the mitochondrion inner membrane. Functionally, subunit delta, of the mitochondrial membrane ATP synthase complex (F(1)F(0) ATP synthase or Complex V) that produces ATP from ADP in the presence of a proton gradient across the membrane which is generated by electron transport complexes of the respiratory chain. ATP synthase complex consist of a soluble F(1) head domain - the catalytic core - and a membrane F(1) domain - the membrane proton channel. These two domains are linked by a central stalk rotating inside the F(1) region and a stationary peripheral stalk. During catalysis, ATP synthesis in the catalytic domain of F(1) is coupled via a rotary mechanism of the central stalk subunits to proton translocation. In vivo, can only synthesize ATP although its ATP hydrolase activity can be activated artificially in vitro. With the central stalk subunit gamma, is essential for the biogenesis of F(1) catalytic part of the ATP synthase complex namely in the formation of F1 assembly intermediate. In Sus scrofa (Pig), this protein is ATP synthase F(1) complex subunit delta, mitochondrial.